We begin with the raw amino-acid sequence, 269 residues long: 4-hydroxy-tetrahydrodipicolinate reductase (269 aa).

Residues 9 to 14 (GCAGKM), aspartate 35, 102 to 104 (GTT), and 128 to 131 (APNF) each bind NAD(+). The Proton donor/acceptor role is filled by histidine 158. (S)-2,3,4,5-tetrahydrodipicolinate is bound at residue histidine 159. Lysine 162 functions as the Proton donor in the catalytic mechanism. 168–169 (GT) is a (S)-2,3,4,5-tetrahydrodipicolinate binding site.

The protein belongs to the DapB family.

The protein resides in the cytoplasm. It catalyses the reaction (S)-2,3,4,5-tetrahydrodipicolinate + NAD(+) + H2O = (2S,4S)-4-hydroxy-2,3,4,5-tetrahydrodipicolinate + NADH + H(+). It carries out the reaction (S)-2,3,4,5-tetrahydrodipicolinate + NADP(+) + H2O = (2S,4S)-4-hydroxy-2,3,4,5-tetrahydrodipicolinate + NADPH + H(+). It participates in amino-acid biosynthesis; L-lysine biosynthesis via DAP pathway; (S)-tetrahydrodipicolinate from L-aspartate: step 4/4. Catalyzes the conversion of 4-hydroxy-tetrahydrodipicolinate (HTPA) to tetrahydrodipicolinate. The polypeptide is 4-hydroxy-tetrahydrodipicolinate reductase (Gloeobacter violaceus (strain ATCC 29082 / PCC 7421)).